The following is a 393-amino-acid chain: Formate-dependent phosphoribosylglycinamide formyltransferase (393 aa).

N(1)-(5-phospho-beta-D-ribosyl)glycinamide is bound by residues 22–23 and glutamate 82; that span reads EL. ATP contacts are provided by residues arginine 114, lysine 155, 160 to 165, 195 to 198, and glutamate 203; these read SSGHGQ and EGFI. Residues 119–308 enclose the ATP-grasp domain; sequence RLAAEELGLK…QFALHARAIL (190 aa). The Mg(2+) site is built by glutamate 267 and glutamate 279. Residues aspartate 286, lysine 356, and 363–364 contribute to the N(1)-(5-phospho-beta-D-ribosyl)glycinamide site; that span reads RR.

This sequence belongs to the PurK/PurT family. As to quaternary structure, homodimer.

The enzyme catalyses N(1)-(5-phospho-beta-D-ribosyl)glycinamide + formate + ATP = N(2)-formyl-N(1)-(5-phospho-beta-D-ribosyl)glycinamide + ADP + phosphate + H(+). Its pathway is purine metabolism; IMP biosynthesis via de novo pathway; N(2)-formyl-N(1)-(5-phospho-D-ribosyl)glycinamide from N(1)-(5-phospho-D-ribosyl)glycinamide (formate route): step 1/1. In terms of biological role, involved in the de novo purine biosynthesis. Catalyzes the transfer of formate to 5-phospho-ribosyl-glycinamide (GAR), producing 5-phospho-ribosyl-N-formylglycinamide (FGAR). Formate is provided by PurU via hydrolysis of 10-formyl-tetrahydrofolate. The chain is Formate-dependent phosphoribosylglycinamide formyltransferase from Actinobacillus pleuropneumoniae serotype 3 (strain JL03).